Reading from the N-terminus, the 398-residue chain is Polyferredoxin protein VhuB (398 aa).

11 4Fe-4S ferredoxin-type domains span residues 2-31 (AGIK…IAPF), 25-53 (AIEI…VENN), 54-83 (GKLI…VDDR), 82-111 (DRFP…IPGK), 123-152 (QEPI…IEDE), 152-181 (ELAV…VAGK), 191-219 (KSFT…YNRE), 220-249 (DLIV…LEVE), 259-291 (EGLV…MINQ), 300-331 (TKTD…MGKI), and 339-368 (NRIE…LTGD). Residues cysteine 11, cysteine 14, cysteine 17, cysteine 21, cysteine 34, cysteine 37, cysteine 40, cysteine 44, cysteine 63, cysteine 66, cysteine 69, cysteine 73, cysteine 91, cysteine 94, cysteine 97, cysteine 101, cysteine 132, cysteine 135, cysteine 138, cysteine 142, cysteine 161, cysteine 164, cysteine 167, cysteine 171, cysteine 199, cysteine 202, cysteine 205, cysteine 209, cysteine 229, cysteine 232, cysteine 235, cysteine 239, cysteine 268, cysteine 271, cysteine 274, cysteine 278, cysteine 311, cysteine 314, cysteine 317, cysteine 321, cysteine 348, cysteine 351, cysteine 354, cysteine 358, cysteine 377, cysteine 380, cysteine 383, and cysteine 387 each contribute to the [4Fe-4S] cluster site.

It depends on [4Fe-4S] cluster as a cofactor.

This is Polyferredoxin protein VhuB (vhuB) from Methanococcus voltae.